Here is a 203-residue protein sequence, read N- to C-terminus: Large ribosomal subunit protein uL13 (203 aa).

Residue A2 is modified to N-acetylalanine. R59 is modified (citrulline). Residue S77 is modified to Phosphoserine. The residue at position 140 (R140) is a Citrulline. An N6-acetyllysine modification is found at K191.

Belongs to the universal ribosomal protein uL13 family. Component of the 60S ribosome. Component of the GAIT complex. Interacts with EIF4G1. Post-translationally, phosphorylation at Ser-77 upon interferon-gamma treatment in macrophages involves a DAPK1-DAPK3 kinase cascade and is causing release from the ribosome, association with the GAIT complex and subsequent involvement in transcript-selective translation inhibition. Citrullinated by PADI4.

The protein resides in the cytoplasm. Associated with ribosomes but is not required for canonical ribosome function and has extra-ribosomal functions. Component of the GAIT (gamma interferon-activated inhibitor of translation) complex which mediates interferon-gamma-induced transcript-selective translation inhibition in inflammation processes. Upon interferon-gamma activation and subsequent phosphorylation dissociates from the ribosome and assembles into the GAIT complex which binds to stem loop-containing GAIT elements in the 3'-UTR of diverse inflammatory mRNAs (such as ceruplasmin) and suppresses their translation. In the GAIT complex interacts with m7G cap-bound eIF4G at or near the eIF3-binding site and blocks the recruitment of the 43S ribosomal complex. Involved in methylation of rRNA. This is Large ribosomal subunit protein uL13 (Rpl13a) from Rattus norvegicus (Rat).